The following is a 179-amino-acid chain: UPF0200 protein TV0279 (179 aa).

Residue 6 to 13 (GMPGAGKD) coordinates ATP.

It belongs to the UPF0200 family.

The chain is UPF0200 protein TV0279 from Thermoplasma volcanium (strain ATCC 51530 / DSM 4299 / JCM 9571 / NBRC 15438 / GSS1).